Reading from the N-terminus, the 706-residue chain is MQLLCVFCLVLLWEVGAASLSEVKLHLDIEGHASHYTIPWTELMAKVPGLSPEALWREANVTEDLASMLNRYKLIYKTSGTLGIALAEPVDIPAVSEGSMQVDASKVHPGVISGLNSPACMLSAPLEKQLFYYIGTMLPNTRPHSYVFYQLRCHLSYVALSINGDKFQYTGAMTSKFLMGTYKRVTEKGDEHVLSLIFGKTKDLPDLRGPFSYPSLTSAQSGDYSLVIVTTFVHYANFHNYFVPNLKDMFSRAVTMTAASYARYVLQKLVLLEMKGGCREPELDTETLTTMFEVSVAFFKVGHAVGETGNGCVDLRWLAKSFFELTVLKDIIGICYGATVKGMQSYGLERLAAMLMATVKMEELGHLTTEKQEYALRLATVGYPKAGVYSGLIGGATSVLLSAYNRHPLFQPLHTVMRETLFIGSHVVLRELRLNVTTQGPNLALYQLLSTALCSALEIGEVLRGLALGTESGLFSPCYLSLRFDLTRDKLLSMAPQEAMLDQAAVSNAVDGFLGRLSLEREDRDAWHLPAYKCVDRLDKVLMIIPLINVTFIISSDREVRGSALYEASTTYLSSSLFLSPVIMNKCSQGAVAGEPRQIPKIQNFTRTQKSCIFCGFALLSYDEKEGLETTTYITSQEVQNSILSSNYFDFDNLHVHYLLLTTNGTVMEIAGLYEERAHVVLAIILYFIAFALGIFLVHKIVMFFL.

A signal peptide spans 1–18 (MQLLCVFCLVLLWEVGAA). The Virion surface portion of the chain corresponds to 19-682 (SLSEVKLHLD…LYEERAHVVL (664 aa)). Asn-60 carries an N-linked (GlcNAc...) asparagine; by host glycan. The segment at 165 to 229 (DKFQYTGAMT…QSGDYSLVIV (65 aa)) is interaction with gL. Cysteines 278 and 335 form a disulfide. An N-linked (GlcNAc...) asparagine; by host glycan is attached at Asn-435. Intrachain disulfides connect Cys-454–Cys-478 and Cys-534–Cys-587. Asn-549 and Asn-604 each carry an N-linked (GlcNAc...) asparagine; by host glycan. A disulfide bridge connects residues Cys-612 and Cys-615. An N-linked (GlcNAc...) asparagine; by host glycan is attached at Asn-664. The helical transmembrane segment at 683-703 (AIILYFIAFALGIFLVHKIVM) threads the bilayer. The Intravirion portion of the chain corresponds to 704–706 (FFL).

This sequence belongs to the herpesviridae glycoprotein H family. In terms of assembly, interacts with glycoprotein L (gL); this interaction is necessary for the correct processing and cell surface expression of gH. The heterodimer gH/gL seems to interact with gB trimers during fusion. The heterodimer gH/gL interacts with host EPHA2 to facilitate virus internalization and fusion. Interacts with glycoprotein 42/BZLF2. N-glycosylated, O-glycosylated, and sialylated.

It is found in the virion membrane. It localises to the host cell membrane. The protein localises to the host endosome membrane. Functionally, the heterodimer glycoprotein H-glycoprotein L is required for the fusion of viral and plasma membranes leading to virus entry into the host cell. Following initial binding to host receptor, membrane fusion is mediated by the fusion machinery composed of gB and the heterodimer gH/gL. May also be involved in the fusion between the virion envelope and the outer nuclear membrane during virion morphogenesis. The heterodimer gH/gL targets also host EPHA2 to promote viral entry. The chain is Envelope glycoprotein H from Homo sapiens (Human).